The primary structure comprises 86 residues: Cytochrome c-555 (86 aa).

Positions 14, 17, 18, and 60 each coordinate heme c.

Post-translationally, binds 1 heme c group covalently per subunit.

In terms of biological role, this basic c-type monoheme cytochrome has been found exclusively in the green photosynthetic bacteria, although its role in bacterial photosynthesis is not established. It has an unusually low redox potential compared with mitochondrial cytochrome c. It is reactive with cytochrome c oxidases but not with reductases. The sequence is that of Cytochrome c-555 from Chlorobaculum thiosulfatiphilum (Chlorobium limicola f.sp. thiosulfatophilum).